A 140-amino-acid chain; its full sequence is ATP synthase epsilon chain 1 (140 aa).

It belongs to the ATPase epsilon chain family. In terms of assembly, F-type ATPases have 2 components, CF(1) - the catalytic core - and CF(0) - the membrane proton channel. CF(1) has five subunits: alpha(3), beta(3), gamma(1), delta(1), epsilon(1). CF(0) has three main subunits: a, b and c.

It localises to the cell inner membrane. In terms of biological role, produces ATP from ADP in the presence of a proton gradient across the membrane. In Photobacterium profundum (strain SS9), this protein is ATP synthase epsilon chain 1.